The following is a 688-amino-acid chain: Glycine--tRNA ligase beta subunit (688 aa).

Belongs to the class-II aminoacyl-tRNA synthetase family. Tetramer of two alpha and two beta subunits.

The protein localises to the cytoplasm. It carries out the reaction tRNA(Gly) + glycine + ATP = glycyl-tRNA(Gly) + AMP + diphosphate. The chain is Glycine--tRNA ligase beta subunit from Vibrio parahaemolyticus serotype O3:K6 (strain RIMD 2210633).